We begin with the raw amino-acid sequence, 122 residues long: Large ribosomal subunit protein uL14 (122 aa).

It belongs to the universal ribosomal protein uL14 family. Part of the 50S ribosomal subunit. Forms a cluster with proteins L3 and L19. In the 70S ribosome, L14 and L19 interact and together make contacts with the 16S rRNA in bridges B5 and B8.

Functionally, binds to 23S rRNA. Forms part of two intersubunit bridges in the 70S ribosome. This chain is Large ribosomal subunit protein uL14, found in Sulfurimonas denitrificans (strain ATCC 33889 / DSM 1251) (Thiomicrospira denitrificans (strain ATCC 33889 / DSM 1251)).